The following is a 491-amino-acid chain: Equilibrative nucleobase transporter 1 (491 aa).

A helical transmembrane segment spans residues 17 to 37 (LLECLGFAGVLFGWPSLVFVF). A glycan (N-linked (GlcNAc...) asparagine) is linked at N56. Transmembrane regions (helical) follow at residues 72–92 (LIFT…GYIF), 102–122 (LIAI…SAGS), 123–143 (AVLL…FLIT), 156–176 (STII…FLII), and 188–208 (ASFI…FLLM). N-linked (GlcNAc...) asparagine glycosylation is found at N220 and N229. Position 253 is a phosphoserine (S253). A Phosphothreonine modification is found at T258. A run of 6 helical transmembrane segments spans residues 279–299 (FAWH…FIGT), 319–339 (TNAF…GLLM), 356–376 (STLA…SLLC), 396–418 (ILQV…LAFP), 427–447 (GLVM…FTLI), and 456–476 (FYVN…PFLV).

It belongs to the SLC43A transporter (TC 2.A.1.44) family. Widely expressed with highest levels in the liver and lung, followed by the pancreas. Highly expressed in macrophages.

The protein resides in the basolateral cell membrane. It carries out the reaction adenine(out) = adenine(in). The catalysed reaction is guanine(out) = guanine(in). The enzyme catalyses hypoxanthine(out) = hypoxanthine(in). With respect to regulation, adenine transport is strongly inhibited by decynium-22. Its activity is regulated as follows. 6-mercaptopurine-transport is inhibited by 6-thioguanine, 6-methylmercaptopurine and decynium-22. Functionally, sodium-independent purine-selective nucleobase transporter which mediates the equilibrative transport of extracellular purine nucleobases such as adenine, guanine and hypoxanthine. May regulate fatty acid (FA) transport in adipocytes, acting as a positive regulator of FA efflux and as a negative regulator of FA uptake. Sodium-independent purine-selective nucleobase transporter which mediates the equilibrative transport of extracellular purine nucleobase adenine. Mediates the influx and efflux of the purine nucleobase analog drug 6-mercaptopurine across the membrane. The polypeptide is Equilibrative nucleobase transporter 1 (SLC43A3) (Homo sapiens (Human)).